A 499-amino-acid polypeptide reads, in one-letter code: Ribose import ATP-binding protein RbsA 1 (499 aa).

ABC transporter domains lie at 5–240 (LEMR…GRSI) and 249–494 (TEPG…TAGS). ATP is bound at residue 37–44 (GENGAGKS).

The protein belongs to the ABC transporter superfamily. Ribose importer (TC 3.A.1.2.1) family. As to quaternary structure, the complex is composed of an ATP-binding protein (RbsA), two transmembrane proteins (RbsC) and a solute-binding protein (RbsB).

The protein resides in the cell membrane. The enzyme catalyses D-ribose(out) + ATP + H2O = D-ribose(in) + ADP + phosphate + H(+). In terms of biological role, part of the ABC transporter complex RbsABC involved in ribose import. Responsible for energy coupling to the transport system. In Rubrobacter xylanophilus (strain DSM 9941 / JCM 11954 / NBRC 16129 / PRD-1), this protein is Ribose import ATP-binding protein RbsA 1.